Consider the following 1826-residue polypeptide: Protein TIC 214 (1826 aa).

Helical transmembrane passes span 18 to 38, 67 to 87, 127 to 147, 175 to 195, and 221 to 241; these read IINS…FSIG, FITG…HLAL, LSIQ…HFIL, VGWL…LVWI, and IFSI…PSPI. Residues 250 to 308 are disordered; it reads TEEGWESEEETDVEIETASETKGTKQEQEGSTEEDPSPSLFSEEKEDPDKIDETEEIRV. Acidic residues-rich tracts occupy residues 252 to 266 and 293 to 304; these read EGWE…EIET and EKEDPDKIDETE. A helical transmembrane segment spans residues 774 to 794; that stretch reads LILIIQSIFRKYILLPSLIIV. Residues 1032–1057 form a disordered region; sequence TKGLMKEKNSNAKKRGSPNKTSFNRK. The span at 1042-1057 shows a compositional bias: basic residues; that stretch reads NAKKRGSPNKTSFNRK. Residues 1081-1101 form a helical membrane-spanning segment; that stretch reads FYLFITIFIKRIYIDIFVCII.

This sequence belongs to the TIC214 family. Part of the Tic complex.

It localises to the plastid. The protein localises to the chloroplast inner membrane. Involved in protein precursor import into chloroplasts. May be part of an intermediate translocation complex acting as a protein-conducting channel at the inner envelope. The sequence is that of Protein TIC 214 from Daucus carota (Wild carrot).